Consider the following 162-residue polypeptide: NADH-quinone oxidoreductase subunit I (162 aa).

4Fe-4S ferredoxin-type domains follow at residues 53–83 (LRRYANGEERCIACKLCEAVCPALAITIEAE) and 93–122 (TRYDIDMTKCIYCGLCEEACPVDAIVEGPN). [4Fe-4S] cluster-binding residues include Cys-63, Cys-66, Cys-69, Cys-73, Cys-102, Cys-105, Cys-108, and Cys-112.

Belongs to the complex I 23 kDa subunit family. NDH-1 is composed of 14 different subunits. Subunits NuoA, H, J, K, L, M, N constitute the membrane sector of the complex. [4Fe-4S] cluster is required as a cofactor.

The protein resides in the cell inner membrane. The enzyme catalyses a quinone + NADH + 5 H(+)(in) = a quinol + NAD(+) + 4 H(+)(out). NDH-1 shuttles electrons from NADH, via FMN and iron-sulfur (Fe-S) centers, to quinones in the respiratory chain. The immediate electron acceptor for the enzyme in this species is believed to be ubiquinone. Couples the redox reaction to proton translocation (for every two electrons transferred, four hydrogen ions are translocated across the cytoplasmic membrane), and thus conserves the redox energy in a proton gradient. The protein is NADH-quinone oxidoreductase subunit I of Granulibacter bethesdensis (strain ATCC BAA-1260 / CGDNIH1).